An 83-amino-acid chain; its full sequence is U5-theraphotoxin-Hs1d (83 aa).

Positions 1–21 are cleaved as a signal peptide; that stretch reads MKTSMFLTLTGLVLLFVVCYA. Residues 22–49 constitute a propeptide that is removed on maturation; that stretch reads SESEEKEFPKELLSSIFAADSDFKVEER. Intrachain disulfides connect cysteine 51–cysteine 63, cysteine 56–cysteine 68, and cysteine 62–cysteine 75.

It belongs to the neurotoxin 10 (Hwtx-1) family. 51 (Hntx-8) subfamily. Hntx-8 sub-subfamily. Expressed by the venom gland.

Its subcellular location is the secreted. In terms of biological role, agglutinates erythrocytes. This Cyriopagopus schmidti (Chinese bird spider) protein is U5-theraphotoxin-Hs1d.